We begin with the raw amino-acid sequence, 854 residues long: DNA mismatch repair protein MutS (854 aa).

The disordered stretch occupies residues 1–21 (MTASDIQPTEPHTPPTPHADT). 658 to 665 (GPNASGKS) serves as a coordination point for ATP.

It belongs to the DNA mismatch repair MutS family.

Its function is as follows. This protein is involved in the repair of mismatches in DNA. It is possible that it carries out the mismatch recognition step. This protein has a weak ATPase activity. This chain is DNA mismatch repair protein MutS, found in Trichormus variabilis (strain ATCC 29413 / PCC 7937) (Anabaena variabilis).